A 418-amino-acid polypeptide reads, in one-letter code: Geranylgeranyl pyrophosphate synthase (418 aa).

Over residues 51–64 the composition is skewed to polar residues; that stretch reads TSSTGIPTSLNATP. Residues 51-73 are disordered; it reads TSSTGIPTSLNATPTKPVLRPVP. Isopentenyl diphosphate contacts are provided by K143, R146, and H175. Mg(2+)-binding residues include D182 and D186. R191 provides a ligand contact to dimethylallyl diphosphate. R192 is an isopentenyl diphosphate binding site. Dimethylallyl diphosphate contacts are provided by K269, T270, Q305, K322, and K332.

Belongs to the FPP/GGPP synthase family. Mg(2+) serves as cofactor.

It localises to the cytoplasm. It carries out the reaction isopentenyl diphosphate + dimethylallyl diphosphate = (2E)-geranyl diphosphate + diphosphate. The catalysed reaction is isopentenyl diphosphate + (2E)-geranyl diphosphate = (2E,6E)-farnesyl diphosphate + diphosphate. It catalyses the reaction isopentenyl diphosphate + (2E,6E)-farnesyl diphosphate = (2E,6E,10E)-geranylgeranyl diphosphate + diphosphate. The protein operates within isoprenoid biosynthesis; farnesyl diphosphate biosynthesis; farnesyl diphosphate from geranyl diphosphate and isopentenyl diphosphate: step 1/1. Its pathway is isoprenoid biosynthesis; geranyl diphosphate biosynthesis; geranyl diphosphate from dimethylallyl diphosphate and isopentenyl diphosphate: step 1/1. It participates in isoprenoid biosynthesis; geranylgeranyl diphosphate biosynthesis; geranylgeranyl diphosphate from farnesyl diphosphate and isopentenyl diphosphate: step 1/1. Functionally, catalyzes the trans-addition of the three molecules of IPP onto DMAPP to form geranylgeranyl pyrophosphate. In Fusarium fujikuroi (Bakanae and foot rot disease fungus), this protein is Geranylgeranyl pyrophosphate synthase (GGS).